We begin with the raw amino-acid sequence, 98 residues long: Alpha-defensin 1 (98 aa).

Positions 1 to 19 (MRTLTLLTALLLLALQVQT) are cleaved as a signal peptide. The propeptide occupies 20 to 63 (QSLEETADQVPAQDQPGAEAQDITISFAGDERSAREASKSLIGT). 3 disulfides stabilise this stretch: Cys-66-Cys-96, Cys-68-Cys-84, and Cys-74-Cys-95.

Belongs to the alpha-defensin family. In terms of tissue distribution, paneth cells of the small bowel.

The protein resides in the secreted. In terms of biological role, has broad-spectrum antimicrobial properties. The antimicrobial activity decreases in the present of salt in vitro. Binds anionic phospholipids, which leads to the aggregation of liposomes in vitro. Membrane permeabilization of the target cells is an essential part of the peptide's mode of antimicrobial activity. No hemolytic activity against sheep or horse erythrocytes. Has antibacterial activity against the bacterial horse pathogens Gram-positive R.equi ATCC 33701 P(-) (minimum bactericidal concentration or MBC=5 ug/ml) and R.equi ATCC 33701 P(+) (MBC=5 ug/ml), which are resistant against beta-lactam antibiotics. Also has antibacterial activity against highly infectious wild-type strain R.equi 85F P(+) (MBC=5 ug/ml), S.equi subsp. equi (MBC=5 ug/ml), S.equi subsp. zooepidemicus (MBC=5 ug/ml), S.dysgalactiae subsp. equisimilis (MBC=10 ug/ml), S.choleraesuis subsp. choleraesuis serovar Typhimurium (MBC=10 ug/ml), and P.multocida subsp. multocida (MBC=&gt;10 ug/ml). Probably contributes to the antimicrobial barrier function of the small bowel mucosa. The polypeptide is Alpha-defensin 1 (Equus caballus (Horse)).